Here is a 265-residue protein sequence, read N- to C-terminus: Mlc titration factor A (265 aa).

Positions 111, 148, 152, and 211 each coordinate Zn(2+).

Belongs to the MtfA family. As to quaternary structure, interacts with Mlc. Zn(2+) serves as cofactor.

It is found in the cytoplasm. Functionally, involved in the modulation of the activity of the glucose-phosphotransferase system (glucose-PTS). Interacts with the transcriptional repressor Mlc, preventing its interaction with DNA and leading to the modulation of expression of genes regulated by Mlc, including ptsG, which encodes the PTS system glucose-specific EIICB component. Shows zinc-dependent metallopeptidase activity. This is Mlc titration factor A from Escherichia coli O127:H6 (strain E2348/69 / EPEC).